Consider the following 134-residue polypeptide: D-ribose pyranase (134 aa).

Residue histidine 20 is the Proton donor of the active site. Substrate-binding positions include aspartate 28, histidine 99, and 123 to 125; that span reads FSN.

Belongs to the RbsD / FucU family. RbsD subfamily. In terms of assembly, homodecamer.

Its subcellular location is the cytoplasm. It catalyses the reaction beta-D-ribopyranose = beta-D-ribofuranose. Its pathway is carbohydrate metabolism; D-ribose degradation; D-ribose 5-phosphate from beta-D-ribopyranose: step 1/2. In terms of biological role, catalyzes the interconversion of beta-pyran and beta-furan forms of D-ribose. In Staphylococcus carnosus (strain TM300), this protein is D-ribose pyranase.